The sequence spans 583 residues: Proline--tRNA ligase (583 aa).

Belongs to the class-II aminoacyl-tRNA synthetase family. ProS type 1 subfamily. Homodimer.

The protein resides in the cytoplasm. It catalyses the reaction tRNA(Pro) + L-proline + ATP = L-prolyl-tRNA(Pro) + AMP + diphosphate. Catalyzes the attachment of proline to tRNA(Pro) in a two-step reaction: proline is first activated by ATP to form Pro-AMP and then transferred to the acceptor end of tRNA(Pro). As ProRS can inadvertently accommodate and process non-cognate amino acids such as alanine and cysteine, to avoid such errors it has two additional distinct editing activities against alanine. One activity is designated as 'pretransfer' editing and involves the tRNA(Pro)-independent hydrolysis of activated Ala-AMP. The other activity is designated 'posttransfer' editing and involves deacylation of mischarged Ala-tRNA(Pro). The misacylated Cys-tRNA(Pro) is not edited by ProRS. In Methylococcus capsulatus (strain ATCC 33009 / NCIMB 11132 / Bath), this protein is Proline--tRNA ligase.